Reading from the N-terminus, the 68-residue chain is Protein transport protein Sec61 subunit gamma (68 aa).

The Cytoplasmic portion of the chain corresponds to 1-32; sequence MDQVTKFIEPGRQFAKDSIRLVKRCTKPDRKE. The chain crosses the membrane as a helical span at residues 33-61; the sequence is FQKIAVATAIGFCIMGFIGFFVKLIHIPI. Topologically, residues 62–68 are extracellular; it reads NNIIVGS.

It belongs to the SecE/SEC61-gamma family. As to quaternary structure, heterotrimeric complex composed of SEC61-alpha, SEC61-beta and SEC61-gamma.

It is found in the endoplasmic reticulum membrane. In terms of biological role, necessary for protein translocation in the endoplasmic reticulum. This chain is Protein transport protein Sec61 subunit gamma (SEC61G), found in Gryllotalpa orientalis (Oriental mole cricket).